Reading from the N-terminus, the 286-residue chain is Ribosomal RNA small subunit methyltransferase A (286 aa).

S-adenosyl-L-methionine contacts are provided by N31, I33, G58, E80, D106, and N125.

The protein belongs to the class I-like SAM-binding methyltransferase superfamily. rRNA adenine N(6)-methyltransferase family. RsmA subfamily.

The protein localises to the cytoplasm. It carries out the reaction adenosine(1518)/adenosine(1519) in 16S rRNA + 4 S-adenosyl-L-methionine = N(6)-dimethyladenosine(1518)/N(6)-dimethyladenosine(1519) in 16S rRNA + 4 S-adenosyl-L-homocysteine + 4 H(+). Its function is as follows. Specifically dimethylates two adjacent adenosines (A1518 and A1519) in the loop of a conserved hairpin near the 3'-end of 16S rRNA in the 30S particle. May play a critical role in biogenesis of 30S subunits. The polypeptide is Ribosomal RNA small subunit methyltransferase A (Wolbachia pipientis wMel).